We begin with the raw amino-acid sequence, 149 residues long: Large ribosomal subunit protein bL9 (149 aa).

Belongs to the bacterial ribosomal protein bL9 family.

In terms of biological role, binds to the 23S rRNA. The sequence is that of Large ribosomal subunit protein bL9 from Campylobacter curvus (strain 525.92).